We begin with the raw amino-acid sequence, 298 residues long: uncharacterized protein (298 aa).

9 consecutive transmembrane segments (helical) span residues 10-30 (VIYTAVSFIMWGLFPLYWKLL), 36-56 (LDILAHRIIWSFVFMCIVLFF), 76-96 (ILSLFLASILISINWFVYIWA), 101-121 (FLLEASLGYYINPLVSVLLGI), 142-162 (GVIISAFQYGSIPYVALLLAF), 179-199 (AIGLTLETFMIMPIALGYLLF), 212-232 (GTWLLLFLAGVFTALPLLLFA), 243-263 (VGILQYIAPTITLLIGLFVYH), and 271-291 (AFTFSCIWAALLLFTFSQVKW). EamA domains follow at residues 17–148 (FIMW…ISAF) and 162–286 (FSFG…LFTF).

Belongs to the EamA transporter family.

The protein localises to the cell membrane. This is an uncharacterized protein from Bacillus subtilis (strain 168).